The primary structure comprises 494 residues: Glycerol kinase 1 (494 aa).

Thr12 provides a ligand contact to ADP. ATP-binding residues include Thr12, Thr13, and Ser14. Thr12 lines the sn-glycerol 3-phosphate pocket. Position 16 (Arg16) interacts with ADP. Residues Arg82, Glu83, Tyr134, and Asp243 each contribute to the sn-glycerol 3-phosphate site. 5 residues coordinate glycerol: Arg82, Glu83, Tyr134, Asp243, and Gln244. ADP contacts are provided by Thr265 and Gly308. ATP contacts are provided by Thr265, Gly308, Gln312, and Gly408. Residues Gly408 and Asn412 each contribute to the ADP site.

The protein belongs to the FGGY kinase family.

It catalyses the reaction glycerol + ATP = sn-glycerol 3-phosphate + ADP + H(+). It functions in the pathway polyol metabolism; glycerol degradation via glycerol kinase pathway; sn-glycerol 3-phosphate from glycerol: step 1/1. Its activity is regulated as follows. Inhibited by fructose 1,6-bisphosphate (FBP). In terms of biological role, key enzyme in the regulation of glycerol uptake and metabolism. Catalyzes the phosphorylation of glycerol to yield sn-glycerol 3-phosphate. The chain is Glycerol kinase 1 from Pseudomonas aeruginosa (strain ATCC 15692 / DSM 22644 / CIP 104116 / JCM 14847 / LMG 12228 / 1C / PRS 101 / PAO1).